A 114-amino-acid chain; its full sequence is WQMIVEHKCCVIVMLAREIEAGKKKCEKYWPDAGKQLRFGGISVENRQEVNYSAFRRRVFSVVSEKQEQLTVYQYQFLKWPDHGVPQTTSNLFRMHRAVLKSCQELGNDNPIVV.

The Tyrosine-protein phosphatase domain maps to 1–114 (WQMIVEHKCC…ELGNDNPIVV (114 aa)). D82 contacts substrate.

Belongs to the protein-tyrosine phosphatase family.

The catalysed reaction is O-phospho-L-tyrosyl-[protein] + H2O = L-tyrosyl-[protein] + phosphate. This Styela plicata (Wrinkled sea squirt) protein is Tyrosine-protein phosphatase 27 (STY-27).